The chain runs to 85 residues: Type 3 secretion system needle filament protein (85 aa).

Residues 13–41 (LDTVANALKEQANAANKDVNDAIKALQGT) adopt a coiled-coil conformation.

In terms of assembly, the core secretion machinery of the T3SS is composed of approximately 20 different proteins, including cytoplasmic components, a base, an export apparatus and a needle. This subunit polymerizes and forms the helical needle filament. Forms a stable heterotrimeric complex with PscE and PscG in the cytoplasm, blocking it in a monomeric state and preventing its polymerization.

The protein localises to the secreted. The protein resides in the cell surface. Functionally, component of the type III secretion system (T3SS), also called injectisome, which is used to inject bacterial effector proteins into eukaryotic host cells, facilitating the establishment and dissemination of infection. PscF/SctF forms the external needle filament that protrudes from the bacterial surface. In Pseudomonas aeruginosa (strain ATCC 15692 / DSM 22644 / CIP 104116 / JCM 14847 / LMG 12228 / 1C / PRS 101 / PAO1), this protein is Type 3 secretion system needle filament protein.